The sequence spans 246 residues: uncharacterized protein (246 aa).

Disordered regions lie at residues 29–54 (SLET…ENGS), 93–114 (LRRT…EDKF), and 148–246 (PIPP…SVVI). The span at 35-49 (PTSSSPSLSSNSDVS) shows a compositional bias: low complexity. Residues 172 to 183 (RQQTNNIRTLHV) show a composition bias toward polar residues. Composition is skewed to low complexity over residues 190–203 (SSSS…PSSS) and 214–225 (SKTTKNRSSNSS). Asn219 carries an N-linked (GlcNAc...) asparagine glycan. Residues 235–246 (LTPSPTFESVVI) are compositionally biased toward polar residues.

This is an uncharacterized protein from Caenorhabditis elegans.